We begin with the raw amino-acid sequence, 347 residues long: 4-hydroxy-2-oxovalerate aldolase 2 (347 aa).

The Pyruvate carboxyltransferase domain occupies 9–259 (ITIVDTTLRD…DTGVDLFPLI (251 aa)). Residues 17–18 (RD), Ser171, and His198 each bind substrate. Asp18 lines the Mn(2+) pocket. 2 residues coordinate Mn(2+): His198 and His200. Tyr289 lines the substrate pocket.

It belongs to the 4-hydroxy-2-oxovalerate aldolase family.

The enzyme catalyses (S)-4-hydroxy-2-oxopentanoate = acetaldehyde + pyruvate. In Rhodococcus opacus (strain B4), this protein is 4-hydroxy-2-oxovalerate aldolase 2.